A 192-amino-acid polypeptide reads, in one-letter code: Shikimate kinase (192 aa).

ATP is bound at residue 15-20; that stretch reads GAGKTT. Residue Thr19 coordinates Mg(2+). Residues Asp37, Arg61, and Gly83 each contribute to the substrate site. Arg121 is a binding site for ATP. Residue Arg140 coordinates substrate.

The protein belongs to the shikimate kinase family. Monomer. Mg(2+) serves as cofactor.

It localises to the cytoplasm. It catalyses the reaction shikimate + ATP = 3-phosphoshikimate + ADP + H(+). The protein operates within metabolic intermediate biosynthesis; chorismate biosynthesis; chorismate from D-erythrose 4-phosphate and phosphoenolpyruvate: step 5/7. Its function is as follows. Catalyzes the specific phosphorylation of the 3-hydroxyl group of shikimic acid using ATP as a cosubstrate. In Cupriavidus pinatubonensis (strain JMP 134 / LMG 1197) (Cupriavidus necator (strain JMP 134)), this protein is Shikimate kinase.